A 325-amino-acid chain; its full sequence is Psp operon transcriptional activator (325 aa).

Positions 15-237 (FLEVLEQVSH…ELKNVVERSV (223 aa)) constitute a Sigma-54 factor interaction domain. ATP contacts are provided by residues 36-43 (GERGTGKE) and 99-108 (ADGGTLFLDE). Residues 302–321 (QKRAAELLGLTYHQFRALLK) constitute a DNA-binding region (H-T-H motif).

Forms a complex with PspA, which is composed of around 6 PspF subunits and 6 PspA subunits.

The protein localises to the cytoplasm. ATPase activity is inhibited by interaction with PspA. Under inducing conditions, the interaction is disrupted, allowing activation of psp transcription. In terms of biological role, transcriptional activator for the phage shock protein (psp) operon (pspABCDE) and pspG gene. The protein is Psp operon transcriptional activator (pspF) of Escherichia coli (strain K12).